The sequence spans 223 residues: Small ribosomal subunit protein uS3 (223 aa).

Positions 39-107 (VREFLHKKLA…PVQINIEEVR (69 aa)) constitute a KH type-2 domain.

Belongs to the universal ribosomal protein uS3 family. As to quaternary structure, part of the 30S ribosomal subunit. Forms a tight complex with proteins S10 and S14.

Functionally, binds the lower part of the 30S subunit head. Binds mRNA in the 70S ribosome, positioning it for translation. This is Small ribosomal subunit protein uS3 from Francisella tularensis subsp. novicida (strain U112).